Here is a 195-residue protein sequence, read N- to C-terminus: E3 ubiquitin-protein ligase ZNRF1 (195 aa).

The segment covering 1–10 (MGGKQSSASR) has biased composition (polar residues). The disordered stretch occupies residues 1–37 (MGGKQSSASRSRAPFPGVSSDDSAVPPSSNFGHFRGG). Residue glycine 2 is the site of N-myristoyl glycine attachment. A compositionally biased stretch (low complexity) spans 18–29 (VSSDDSAVPPSS). Residues 152–193 (CVICLEELSQGDTIARLPCLCIYHKSCIDSWFEVNRCCPEHP) form an RING-type; atypical zinc finger.

The protein localises to the endosome. The protein resides in the lysosome. It localises to the membrane. The enzyme catalyses S-ubiquitinyl-[E2 ubiquitin-conjugating enzyme]-L-cysteine + [acceptor protein]-L-lysine = [E2 ubiquitin-conjugating enzyme]-L-cysteine + N(6)-ubiquitinyl-[acceptor protein]-L-lysine.. It functions in the pathway protein modification; protein ubiquitination. Functionally, E3 ubiquitin-protein ligase that plays a role in neuron cells differentiation. Plays a role in the establishment and maintenance of neuronal transmission and plasticity. The chain is E3 ubiquitin-protein ligase ZNRF1 (znrf1) from Xenopus laevis (African clawed frog).